A 415-amino-acid chain; its full sequence is Imidazolonepropionase (415 aa).

Histidine 80 and histidine 82 together coordinate Fe(3+). Histidine 80 and histidine 82 together coordinate Zn(2+). Arginine 89, tyrosine 152, and histidine 185 together coordinate 4-imidazolone-5-propanoate. Residue tyrosine 152 coordinates N-formimidoyl-L-glutamate. A Fe(3+)-binding site is contributed by histidine 250. Residue histidine 250 participates in Zn(2+) binding. Glutamine 253 provides a ligand contact to 4-imidazolone-5-propanoate. Residue aspartate 325 participates in Fe(3+) binding. Aspartate 325 serves as a coordination point for Zn(2+). Asparagine 327 and glycine 329 together coordinate N-formimidoyl-L-glutamate. 4-imidazolone-5-propanoate is bound at residue threonine 330.

This sequence belongs to the metallo-dependent hydrolases superfamily. HutI family. Zn(2+) serves as cofactor. Fe(3+) is required as a cofactor.

It localises to the cytoplasm. The catalysed reaction is 4-imidazolone-5-propanoate + H2O = N-formimidoyl-L-glutamate. It functions in the pathway amino-acid degradation; L-histidine degradation into L-glutamate; N-formimidoyl-L-glutamate from L-histidine: step 3/3. Its function is as follows. Catalyzes the hydrolytic cleavage of the carbon-nitrogen bond in imidazolone-5-propanoate to yield N-formimidoyl-L-glutamate. It is the third step in the universal histidine degradation pathway. The protein is Imidazolonepropionase of Rhizobium meliloti (strain 1021) (Ensifer meliloti).